Here is a 472-residue protein sequence, read N- to C-terminus: Argininosuccinate lyase (472 aa).

The protein belongs to the lyase 1 family. Argininosuccinate lyase subfamily.

It localises to the cytoplasm. It catalyses the reaction 2-(N(omega)-L-arginino)succinate = fumarate + L-arginine. The protein operates within amino-acid biosynthesis; L-arginine biosynthesis; L-arginine from L-ornithine and carbamoyl phosphate: step 3/3. The protein is Argininosuccinate lyase of Synechococcus sp. (strain CC9605).